Here is a 375-residue protein sequence, read N- to C-terminus: Histidine biosynthesis bifunctional protein HisB (375 aa).

Positions 1-168 (MTPILFVDRD…GIAHELADAP (168 aa)) are histidinol-phosphatase. Catalysis depends on D8, which acts as the Nucleophile. Residues D8, D10, and D128 each contribute to the Mg(2+) site. D10 serves as the catalytic Proton donor. The segment at 169-375 (RRALVQRNTK…TALPTTKGTL (207 aa)) is imidazoleglycerol-phosphate dehydratase.

In the N-terminal section; belongs to the histidinol-phosphatase family. It in the C-terminal section; belongs to the imidazoleglycerol-phosphate dehydratase family. Mg(2+) is required as a cofactor.

The protein resides in the cytoplasm. It carries out the reaction D-erythro-1-(imidazol-4-yl)glycerol 3-phosphate = 3-(imidazol-4-yl)-2-oxopropyl phosphate + H2O. The catalysed reaction is L-histidinol phosphate + H2O = L-histidinol + phosphate. The protein operates within amino-acid biosynthesis; L-histidine biosynthesis; L-histidine from 5-phospho-alpha-D-ribose 1-diphosphate: step 6/9. It participates in amino-acid biosynthesis; L-histidine biosynthesis; L-histidine from 5-phospho-alpha-D-ribose 1-diphosphate: step 8/9. This chain is Histidine biosynthesis bifunctional protein HisB, found in Xanthomonas axonopodis pv. citri (strain 306).